Here is a 427-residue protein sequence, read N- to C-terminus: Glutamyl-tRNA(Gln) amidotransferase subunit D (427 aa).

Positions 74-407 constitute an Asparaginase/glutaminase domain; that stretch reads ERVYIIGAGG…EVVRKMFQRN (334 aa). Residues Thr-84, Thr-160, Asp-161, and Lys-240 contribute to the active site.

This sequence belongs to the asparaginase 1 family. GatD subfamily. Heterodimer of GatD and GatE.

The catalysed reaction is L-glutamyl-tRNA(Gln) + L-glutamine + ATP + H2O = L-glutaminyl-tRNA(Gln) + L-glutamate + ADP + phosphate + H(+). Allows the formation of correctly charged Gln-tRNA(Gln) through the transamidation of misacylated Glu-tRNA(Gln) in organisms which lack glutaminyl-tRNA synthetase. The reaction takes place in the presence of glutamine and ATP through an activated gamma-phospho-Glu-tRNA(Gln). The GatDE system is specific for glutamate and does not act on aspartate. The sequence is that of Glutamyl-tRNA(Gln) amidotransferase subunit D from Aeropyrum pernix (strain ATCC 700893 / DSM 11879 / JCM 9820 / NBRC 100138 / K1).